The chain runs to 194 residues: Putative manganese efflux pump MntP (194 aa).

6 helical membrane passes run 3-23 (PITI…AAIG), 37-57 (LYVA…GWLL), 65-85 (IATF…IHMI), 112-132 (LAAT…SLAF), 139-159 (IVAA…VMLG), and 170-190 (AEIV…YEHL).

This sequence belongs to the MntP (TC 9.B.29) family.

The protein localises to the cell inner membrane. In terms of biological role, probably functions as a manganese efflux pump. The chain is Putative manganese efflux pump MntP from Xylella fastidiosa (strain 9a5c).